The chain runs to 124 residues: Small ribosomal subunit protein uS12 (124 aa).

Residues Met1–Gly32 are disordered. Positions Arg9 to Lys20 are enriched in basic residues. Residue Asp89 is modified to 3-methylthioaspartic acid.

This sequence belongs to the universal ribosomal protein uS12 family. As to quaternary structure, part of the 30S ribosomal subunit. Contacts proteins S8 and S17. May interact with IF1 in the 30S initiation complex.

With S4 and S5 plays an important role in translational accuracy. In terms of biological role, interacts with and stabilizes bases of the 16S rRNA that are involved in tRNA selection in the A site and with the mRNA backbone. Located at the interface of the 30S and 50S subunits, it traverses the body of the 30S subunit contacting proteins on the other side and probably holding the rRNA structure together. The combined cluster of proteins S8, S12 and S17 appears to hold together the shoulder and platform of the 30S subunit. This chain is Small ribosomal subunit protein uS12, found in Leptospira borgpetersenii serovar Hardjo-bovis (strain JB197).